The primary structure comprises 269 residues: Glucosyl-3-phosphoglycerate/mannosyl-3-phosphoglycerate phosphatase (269 aa).

D6 functions as the Nucleophile in the catalytic mechanism. Residues D6, D8, and D210 each coordinate Mg(2+).

The protein belongs to the HAD-like hydrolase superfamily. MPGP family. In terms of assembly, monomer. It depends on Co(2+) as a cofactor. Requires Mg(2+) as cofactor.

It carries out the reaction (2R)-2-O-(alpha-D-glucopyranosyl)-3-phospho-glycerate + H2O = (2R)-2-O-(alpha-D-glucopyranosyl)-glycerate + phosphate. The catalysed reaction is 2-O-(alpha-D-mannosyl)-3-phosphoglycerate + H2O = (2R)-2-O-(alpha-D-mannosyl)-glycerate + phosphate. Involved in the biosynthesis of glucosylglycerate. Catalyzes the dephosphorylation of glucosyl-3-phosphoglycerate (GPG) and mannosyl-3-phosphoglycerate (MPG) to glucosylglycerate (GG) and mannosylglycerate (MG), respectively. The polypeptide is Glucosyl-3-phosphoglycerate/mannosyl-3-phosphoglycerate phosphatase (Persephonella marina (strain DSM 14350 / EX-H1)).